Consider the following 333-residue polypeptide: Putative F-box protein At4g11580 (333 aa).

One can recognise an F-box domain in the interval 11-58 (VSEWADLNKDILELIFNKLDVMDITMGASRVCISWFLASHNKTLWNTV).

In Arabidopsis thaliana (Mouse-ear cress), this protein is Putative F-box protein At4g11580.